The following is a 331-amino-acid chain: Anthranilate phosphoribosyltransferase (331 aa).

5-phospho-alpha-D-ribose 1-diphosphate is bound by residues G79, 82 to 83, S87, 89 to 92, 107 to 115, and S119; these read GD, NIST, and KHCNTSISS. G79 is an anthranilate binding site. S91 is a Mg(2+) binding site. N110 contributes to the anthranilate binding site. Anthranilate is bound at residue R165. Positions 223 and 224 each coordinate Mg(2+).

This sequence belongs to the anthranilate phosphoribosyltransferase family. Homodimer. Mg(2+) is required as a cofactor.

It catalyses the reaction N-(5-phospho-beta-D-ribosyl)anthranilate + diphosphate = 5-phospho-alpha-D-ribose 1-diphosphate + anthranilate. Its pathway is amino-acid biosynthesis; L-tryptophan biosynthesis; L-tryptophan from chorismate: step 2/5. Catalyzes the transfer of the phosphoribosyl group of 5-phosphorylribose-1-pyrophosphate (PRPP) to anthranilate to yield N-(5'-phosphoribosyl)-anthranilate (PRA). The sequence is that of Anthranilate phosphoribosyltransferase from Buchnera aphidicola subsp. Schlechtendalia chinensis.